The following is a 217-amino-acid chain: Probable GTP-binding protein EngB (217 aa).

In terms of domain architecture, EngB-type G spans 27–201 (EGIEVAFAGR…REKLDTWFSE (175 aa)). Residues 35-42 (GRSNAGKS), 62-66 (GRTQL), 80-83 (DLPG), 147-150 (TKAD), and 180-182 (FSS) each bind GTP. Ser42 and Thr64 together coordinate Mg(2+).

The protein belongs to the TRAFAC class TrmE-Era-EngA-EngB-Septin-like GTPase superfamily. EngB GTPase family. Mg(2+) is required as a cofactor.

In terms of biological role, necessary for normal cell division and for the maintenance of normal septation. This is Probable GTP-binding protein EngB from Yersinia enterocolitica serotype O:8 / biotype 1B (strain NCTC 13174 / 8081).